Reading from the N-terminus, the 261-residue chain is Zinc finger protein 664 (261 aa).

9 consecutive C2H2-type zinc fingers follow at residues 3 to 25 (YKCPMCREFFSERADLFMHQKIH), 31 to 53 (HKCDKCDKGFFHISELHIHWRDH), 59 to 81 (YKCDDCGKDFSTTTKLNRHKKIH), 87 to 109 (YKCYECGKAFNWSSHLQIHMRVH), 115 to 137 (YVCSECGRGFSNSSNLCMHQRVH), 143 to 165 (FKCEECGKAFRHTSSLCMHQRVH), 171 to 193 (YKCYECGKAFSQSSSLCIHQRVH), 199 to 221 (YRCCGCGKAFSQSSSLCIHQRVH), and 227 to 249 (FKCDECGKAFSQSTSLCIHQRVH). Residue lysine 257 forms a Glycyl lysine isopeptide (Lys-Gly) (interchain with G-Cter in SUMO2) linkage.

The protein belongs to the krueppel C2H2-type zinc-finger protein family.

The protein resides in the nucleus. In terms of biological role, may be involved in transcriptional regulation. This is Zinc finger protein 664 (ZNF664) from Pongo abelii (Sumatran orangutan).